The primary structure comprises 681 residues: Proton channel OTOP3 (681 aa).

Residues 1-25 (MLSKEEPACRQFHSREKTWGNEHNG) are compositionally biased toward basic and acidic residues. A disordered region spans residues 1–26 (MLSKEEPACRQFHSREKTWGNEHNGK). The Cytoplasmic portion of the chain corresponds to 1–112 (MLSKEEPACR…LHQRAKKTGR (112 aa)). Residues 113 to 133 (LFSGLFGLNLMFLGGTVVSSV) form a helical membrane-spanning segment. The Extracellular segment spans residues 134 to 143 (ALSNKAVPER). A helical transmembrane segment spans residues 144–166 (DSQSFLCILMLLSSVWALYHLLF). The Cytoplasmic segment spans residues 167-182 (IRNQNGAVHHDHHAGA). Residues 183–204 (MWLKASLAIFGVCSIILSIFEI) form a helical membrane-spanning segment. Over 205-216 (GHALLLQNCEIL) the chain is Extracellular. A helical membrane pass occupies residues 217-240 (MDIVFFSIEIVFVSVQTVLLWVSC). At 241–248 (KDCVQMHH) the chain is on the cytoplasmic side. The helical transmembrane segment at 249–271 (SVTRYGIMLTLATDILLWLTAVI) threads the bilayer. Residues 272–317 (DDSLEQDLEILQSNSTQDESNEMAQCQCPTDSMCWGLKQGYVTMFP) are Extracellular-facing. The chain crosses the membrane as a helical span at residues 318-334 (FNIEYSLICATLLFIMW). Residues 335–358 (KNVGRREKLHSDPPRHTFQLRGII) lie on the Cytoplasmic side of the membrane. The helical transmembrane segment at 359-378 (YGPLIGGAALLVGISVFVQY) threads the bilayer. The Extracellular segment spans residues 379 to 392 (QVEATSGMVSILSY). Residues 393-415 (HMYYGYKMIILAPMIVCSVAGII) form a helical membrane-spanning segment. The Cytoplasmic segment spans residues 416 to 507 (AHSLREKEKK…QGKMKNYTRK (92 aa)). The helical transmembrane segment at 508–529 (LDVTLLFVSAVGQLGISYFSII) threads the bilayer. Over 530–540 (ATVVTTPWTML) the chain is Extracellular. Residues 541–563 (SALNFSNSLLLILQYLSQTMFII) traverse the membrane as a helical segment. At 564–614 (ESMRSIHEEEKEKPGHHEESHRRMSVQEMHKAPPSCLDAGHLGLSRRVVKE) the chain is on the cytoplasmic side. The chain crosses the membrane as a helical span at residues 615–632 (MAMFLMICNIMCWILGAF). Over 633-651 (GAHPLYMNGLERQLYGSGI) the chain is Extracellular. The chain crosses the membrane as a helical span at residues 652–674 (WLAILNIGLPLSVFYRMHSVGIL). The Cytoplasmic segment spans residues 675–681 (LEVYLHA).

The protein belongs to the otopetrin family. In terms of assembly, homodimer.

The protein localises to the cell membrane. The catalysed reaction is H(+)(in) = H(+)(out). PH regulates the proton channel activity from both sides of the plasma membrane. Low pH activates the channel from the extracellular side but inactivates the channel on the intracellular side. Zn(2+) and Ca(2+) can partially block the channel. Proton-selective channel gated by extracellular protons. This is Proton channel OTOP3 (otop3) from Xenopus tropicalis (Western clawed frog).